We begin with the raw amino-acid sequence, 268 residues long: Glucosamine-6-phosphate deaminase (268 aa).

Catalysis depends on D72, which acts as the Proton acceptor; for enolization step. The For ring-opening step role is filled by D141. Residue H143 is the Proton acceptor; for ring-opening step of the active site. Residue E148 is the For ring-opening step of the active site.

Belongs to the glucosamine/galactosamine-6-phosphate isomerase family. NagB subfamily. Homohexamer.

It carries out the reaction alpha-D-glucosamine 6-phosphate + H2O = beta-D-fructose 6-phosphate + NH4(+). It participates in amino-sugar metabolism; N-acetylneuraminate degradation; D-fructose 6-phosphate from N-acetylneuraminate: step 5/5. With respect to regulation, allosterically activated by N-acetylglucosamine 6-phosphate (GlcNAc6P). Functionally, catalyzes the reversible isomerization-deamination of glucosamine 6-phosphate (GlcN6P) to form fructose 6-phosphate (Fru6P) and ammonium ion. The chain is Glucosamine-6-phosphate deaminase from Histophilus somni (strain 2336) (Haemophilus somnus).